The following is an 839-amino-acid chain: Heat shock 70 kDa protein 4L (839 aa).

A phosphoserine mark is found at serine 74 and serine 508. Positions 503-554 are enriched in basic and acidic residues; sequence LEGDHSDAPMETETSFKNENKDNMDKMQVDQEEGHQKCHAEHTPEEEIDHTG. Residues 503-567 are disordered; it reads LEGDHSDAPM…KSAVSDKQDR (65 aa). Threonine 545 is subject to Phosphothreonine. Serine 579 carries the phosphoserine modification. Residue threonine 761 is modified to Phosphothreonine. Positions 786 to 839 are disordered; that stretch reads IYKPKPKAEVPEDKPKANSEHNGPMDGQSGTETKSDSTKDSSQHTKSSGEMEVD. Basic and acidic residues-rich tracts occupy residues 791-804 and 818-839; these read PKAEVPEDKPKANS and TKSDSTKDSSQHTKSSGEMEVD.

Belongs to the heat shock protein 70 family. Homodimer.

The protein resides in the cytoplasm. Its subcellular location is the nucleus. Functionally, possesses chaperone activity in vitro where it inhibits aggregation of citrate synthase. The polypeptide is Heat shock 70 kDa protein 4L (HSPA4L) (Homo sapiens (Human)).